The primary structure comprises 280 residues: uncharacterized protein (280 aa).

CBS domains follow at residues 10–67 (QNKK…GSKY), 90–146 (MEEN…KIDE), 154–209 (ITRD…DWAF), and 229–280 (MKRD…KYFA).

This is an uncharacterized protein from Methanocaldococcus jannaschii (strain ATCC 43067 / DSM 2661 / JAL-1 / JCM 10045 / NBRC 100440) (Methanococcus jannaschii).